The following is a 202-amino-acid chain: MIAYVEGRLAEVAGNACVVVTDGGVGYEVFVPGHTLARLPDKGGRVSFFISTEVREDALELYGFATWDERQTFIVLTSISKVGAKTGLAILSQFRPDDLRRLVVEDDVLALTRVSGIGKKTAQHIFLELKYKLKVEDLPAAAPLVTGGAPGGVFRDALAGLANLGYGEEEASHVLKEVLHGEPDLDVGGALRAALRALARGR.

Residues 1 to 65 form a domain I region; it reads MIAYVEGRLA…EDALELYGFA (65 aa). The segment at 66–144 is domain II; sequence TWDERQTFIV…VEDLPAAAPL (79 aa). Positions 145-155 are flexible linker; that stretch reads VTGGAPGGVFR. The domain III stretch occupies residues 155-202; that stretch reads RDALAGLANLGYGEEEASHVLKEVLHGEPDLDVGGALRAALRALARGR.

It belongs to the RuvA family. Homotetramer. Forms an RuvA(8)-RuvB(12)-Holliday junction (HJ) complex. HJ DNA is sandwiched between 2 RuvA tetramers; dsDNA enters through RuvA and exits via RuvB. An RuvB hexamer assembles on each DNA strand where it exits the tetramer. Each RuvB hexamer is contacted by two RuvA subunits (via domain III) on 2 adjacent RuvB subunits; this complex drives branch migration. In the full resolvosome a probable DNA-RuvA(4)-RuvB(12)-RuvC(2) complex forms which resolves the HJ.

Its subcellular location is the cytoplasm. Functionally, the RuvA-RuvB-RuvC complex processes Holliday junction (HJ) DNA during genetic recombination and DNA repair, while the RuvA-RuvB complex plays an important role in the rescue of blocked DNA replication forks via replication fork reversal (RFR). RuvA specifically binds to HJ cruciform DNA, conferring on it an open structure. The RuvB hexamer acts as an ATP-dependent pump, pulling dsDNA into and through the RuvAB complex. HJ branch migration allows RuvC to scan DNA until it finds its consensus sequence, where it cleaves and resolves the cruciform DNA. This is Holliday junction branch migration complex subunit RuvA from Nitratidesulfovibrio vulgaris (strain DP4) (Desulfovibrio vulgaris).